Here is a 61-residue protein sequence, read N- to C-terminus: Lens epithelial cell protein LEP503 (61 aa).

In terms of tissue distribution, preferentially expressed in the lens epithelial cells.

The chain is Lens epithelial cell protein LEP503 (Lenep) from Rattus norvegicus (Rat).